A 220-amino-acid polypeptide reads, in one-letter code: Pyridoxine/pyridoxamine 5'-phosphate oxidase (220 aa).

Residues 49–54, 68–69, Lys75, and Gln97 contribute to the FMN site; these read RMVLLK and YT. Lys54 contacts substrate. 3 residues coordinate substrate: Tyr115, Arg119, and Ser123. FMN contacts are provided by residues 132–133 and Trp176; that span reads QS. 182–184 is a substrate binding site; it reads RLH. Arg186 is a binding site for FMN.

It belongs to the pyridoxamine 5'-phosphate oxidase family. As to quaternary structure, homodimer. Requires FMN as cofactor.

The enzyme catalyses pyridoxamine 5'-phosphate + O2 + H2O = pyridoxal 5'-phosphate + H2O2 + NH4(+). It carries out the reaction pyridoxine 5'-phosphate + O2 = pyridoxal 5'-phosphate + H2O2. It functions in the pathway cofactor metabolism; pyridoxal 5'-phosphate salvage; pyridoxal 5'-phosphate from pyridoxamine 5'-phosphate: step 1/1. The protein operates within cofactor metabolism; pyridoxal 5'-phosphate salvage; pyridoxal 5'-phosphate from pyridoxine 5'-phosphate: step 1/1. Functionally, catalyzes the oxidation of either pyridoxine 5'-phosphate (PNP) or pyridoxamine 5'-phosphate (PMP) into pyridoxal 5'-phosphate (PLP). This is Pyridoxine/pyridoxamine 5'-phosphate oxidase from Paracoccus denitrificans (strain Pd 1222).